Here is a 229-residue protein sequence, read N- to C-terminus: tRNA (guanine-N(7)-)-methyltransferase (229 aa).

Residues Glu59, Glu84, Asp111, and Asp134 each contribute to the S-adenosyl-L-methionine site. Residue Asp134 is part of the active site. Substrate-binding positions include Lys138, Asp170, and 205–208; that span reads TKFE.

The protein belongs to the class I-like SAM-binding methyltransferase superfamily. TrmB family.

The enzyme catalyses guanosine(46) in tRNA + S-adenosyl-L-methionine = N(7)-methylguanosine(46) in tRNA + S-adenosyl-L-homocysteine. It functions in the pathway tRNA modification; N(7)-methylguanine-tRNA biosynthesis. Functionally, catalyzes the formation of N(7)-methylguanine at position 46 (m7G46) in tRNA. The protein is tRNA (guanine-N(7)-)-methyltransferase of Nitrosospira multiformis (strain ATCC 25196 / NCIMB 11849 / C 71).